We begin with the raw amino-acid sequence, 441 residues long: Methylenetetrahydrofolate--tRNA-(uracil-5-)-methyltransferase TrmFO (441 aa).

Residue 11 to 16 (GGGLAG) coordinates FAD.

It belongs to the MnmG family. TrmFO subfamily. The cofactor is FAD.

Its subcellular location is the cytoplasm. It carries out the reaction uridine(54) in tRNA + (6R)-5,10-methylene-5,6,7,8-tetrahydrofolate + NADH + H(+) = 5-methyluridine(54) in tRNA + (6S)-5,6,7,8-tetrahydrofolate + NAD(+). The enzyme catalyses uridine(54) in tRNA + (6R)-5,10-methylene-5,6,7,8-tetrahydrofolate + NADPH + H(+) = 5-methyluridine(54) in tRNA + (6S)-5,6,7,8-tetrahydrofolate + NADP(+). Catalyzes the folate-dependent formation of 5-methyl-uridine at position 54 (M-5-U54) in all tRNAs. The protein is Methylenetetrahydrofolate--tRNA-(uracil-5-)-methyltransferase TrmFO of Syntrophus aciditrophicus (strain SB).